The chain runs to 400 residues: Large envelope protein (400 aa).

2 disordered regions span residues 1–50 (MGGW…PHKD) and 84–116 (ILTS…RDTH). The N-myristoyl glycine; by host moiety is linked to residue glycine 2. The pre-S1 stretch occupies residues 2-119 (GGWSSKPRKG…PPLRDTHPQA (118 aa)). The interval 2–174 (GGWSSKPRKG…LSTTGDPVPN (173 aa)) is pre-S. Topologically, residues 2–181 (GGWSSKPRKG…VPNMENIASG (180 aa)) are virion surface; in external conformation. The Intravirion; in internal conformation portion of the chain corresponds to 2–253 (GGWSSKPRKG…PGYRWMCLRR (252 aa)). Residues 96–106 (STNRQSGRQPT) are compositionally biased toward polar residues. The interval 120 to 174 (VQWNSTTFHQTLQDPRVRALYLPAGGSSSGTVSPAQNTVSAISSILSTTGDPVPN) is pre-S2. A helical membrane pass occupies residues 182–202 (LLGPLLVLQAGFFSLTKILTI). The Intravirion; in external conformation segment spans residues 203–253 (PQSLDSWWTSLNFLGGTPVCLGQNSQSQISSHSPTCCPPICPGYRWMCLRR). A helical transmembrane segment spans residues 254 to 274 (FIIFLCILLLCLIFLLVLLDY). Over 275-348 (QGMLPVCPLI…WASVRFSWLS (74 aa)) the chain is Virion surface. Asparagine 320 carries N-linked (GlcNAc...) asparagine; by host glycosylation. A helical transmembrane segment spans residues 349 to 369 (LLVPFVQWFVGLSPTVWLSVI). The Intravirion segment spans residues 370 to 375 (WMMWFW). Residues 376 to 398 (GPSLYNILSPFMPLLPIFLCLWV) traverse the membrane as a helical segment. Residues 399–400 (YM) are Virion surface-facing.

Belongs to the orthohepadnavirus major surface antigen family. As to quaternary structure, li-HBsAg interacts with capsid protein and with HDV Large delta antigen. Isoform M associates with host chaperone CANX through its pre-S2 N glycan. This association may be essential for M proper secretion. Interacts (via its myristoylated pre-S1 region) with the host SLC10A1/NTCP; this interaction is essential for viral entry. Post-translationally, isoform M is N-terminally acetylated by host at a ratio of 90%, and N-glycosylated by host at the pre-S2 region. In terms of processing, myristoylated; this modification is essential for its interaction with the host protein SLC10A1/NTCP.

The protein resides in the virion membrane. Its function is as follows. The large envelope protein exists in two topological conformations, one which is termed 'external' or Le-HBsAg and the other 'internal' or Li-HBsAg. In its external conformation the protein attaches the virus to cell receptors and thereby initiating infection. This interaction determines the species specificity and liver tropism. This attachment induces virion internalization predominantly through caveolin-mediated endocytosis. The large envelope protein also assures fusion between virion membrane and endosomal membrane. In its internal conformation the protein plays a role in virion morphogenesis and mediates the contact with the nucleocapsid like a matrix protein. Functionally, the middle envelope protein plays an important role in the budding of the virion. It is involved in the induction of budding in a nucleocapsid independent way. In this process the majority of envelope proteins bud to form subviral lipoprotein particles of 22 nm of diameter that do not contain a nucleocapsid. In Homo sapiens (Human), this protein is Large envelope protein.